A 425-amino-acid polypeptide reads, in one-letter code: Serine--tRNA ligase (425 aa).

230 to 232 (TAE) lines the L-serine pocket. 261 to 263 (RSE) is an ATP binding site. Glutamate 284 contacts L-serine. 348-351 (EISS) lines the ATP pocket. Serine 384 contacts L-serine.

The protein belongs to the class-II aminoacyl-tRNA synthetase family. Type-1 seryl-tRNA synthetase subfamily. In terms of assembly, homodimer. The tRNA molecule binds across the dimer.

It localises to the cytoplasm. It catalyses the reaction tRNA(Ser) + L-serine + ATP = L-seryl-tRNA(Ser) + AMP + diphosphate + H(+). The enzyme catalyses tRNA(Sec) + L-serine + ATP = L-seryl-tRNA(Sec) + AMP + diphosphate + H(+). The protein operates within aminoacyl-tRNA biosynthesis; selenocysteinyl-tRNA(Sec) biosynthesis; L-seryl-tRNA(Sec) from L-serine and tRNA(Sec): step 1/1. Functionally, catalyzes the attachment of serine to tRNA(Ser). Is also able to aminoacylate tRNA(Sec) with serine, to form the misacylated tRNA L-seryl-tRNA(Sec), which will be further converted into selenocysteinyl-tRNA(Sec). The chain is Serine--tRNA ligase from Streptococcus equi subsp. zooepidemicus (strain H70).